A 436-amino-acid polypeptide reads, in one-letter code: Trigger factor (436 aa).

The PPIase FKBP-type domain occupies 163 to 248 (GDRVVLDFAG…VKEVAEGVLP (86 aa)).

It belongs to the FKBP-type PPIase family. Tig subfamily.

The protein resides in the cytoplasm. The catalysed reaction is [protein]-peptidylproline (omega=180) = [protein]-peptidylproline (omega=0). Involved in protein export. Acts as a chaperone by maintaining the newly synthesized protein in an open conformation. Functions as a peptidyl-prolyl cis-trans isomerase. The polypeptide is Trigger factor (Bordetella parapertussis (strain 12822 / ATCC BAA-587 / NCTC 13253)).